The chain runs to 476 residues: Probable flippase AglR (476 aa).

14 consecutive transmembrane segments (helical) span residues 7–29, 34–56, 83–103, 112–132, 146–166, 168–188, 222–242, 246–266, 287–307, 310–330, 354–373, 377–396, 409–429, and 439–459; these read ASAL…TIYV, GVGA…IPAV, VLTG…SPFV, TQLV…LGGL, ALWG…GVGV, ALFY…VYSL, WLDT…IYEV, ISAL…PTIS, VAGV…GDIL, YGPS…LSVV, FRIG…SLIP, VIGA…ILAV, VSAI…LFTI, and IEVV…LLSL.

It belongs to the AglR/Agl15 family.

The protein localises to the cell membrane. Its pathway is cell surface structure biogenesis; S-layer biogenesis. In terms of biological role, involved in the assembly of a N-linked pentasaccharide that decorates the S-layer glycoprotein and flagellins. Probably mediates or contributes to the translocation of the dolichol-phosphate-mannose across the membrane. The protein is Probable flippase AglR (aglR) of Haloferax volcanii (strain ATCC 29605 / DSM 3757 / JCM 8879 / NBRC 14742 / NCIMB 2012 / VKM B-1768 / DS2) (Halobacterium volcanii).